The sequence spans 262 residues: Phosphonates import ATP-binding protein PhnC (262 aa).

The ABC transporter domain maps to I5 to N253. G37 to S44 serves as a coordination point for ATP.

It belongs to the ABC transporter superfamily. Phosphonates importer (TC 3.A.1.9.1) family. In terms of assembly, the complex is composed of two ATP-binding proteins (PhnC), two transmembrane proteins (PhnE) and a solute-binding protein (PhnD).

The protein localises to the cell inner membrane. The enzyme catalyses phosphonate(out) + ATP + H2O = phosphonate(in) + ADP + phosphate + H(+). In terms of biological role, part of the ABC transporter complex PhnCDE involved in phosphonates import. Responsible for energy coupling to the transport system. The chain is Phosphonates import ATP-binding protein PhnC from Shigella sonnei (strain Ss046).